The sequence spans 745 residues: Junction plakoglobin (745 aa).

The residue at position 1 (M1) is an N-acetylmethionine. T14 is a glycosylation site (O-linked (GlcNAc) threonine). Phosphoserine occurs at positions 99 and 125. ARM repeat units lie at residues 132 to 171, 172 to 215, 216 to 255, 258 to 297, 298 to 341, 342 to 381, 383 to 420, 423 to 464, 470 to 510, 512 to 551, 574 to 613, and 615 to 661; these read NYQD…QLSK, KEAS…LSHH, REGL…NLLL, EGAK…LLAY, GNQE…LSVC, PSNK…NLSD, ATKQ…NLTC, SKNK…HLTS, EMAQ…NLAL, PANH…QPYT, PMNR…ELAQ, and KEAA…PDYR. The interval 132–297 is interaction with DSC1 and DSG1; that stretch reads NYQDDAELAT…TTDCLQLLAY (166 aa). Position 182 is a phosphoserine (S182). Positions 574 to 661 are interaction with DSC1; the sequence is PMNRMEIFRL…ISEDKNPDYR (88 aa). Phosphoserine occurs at positions 665 and 730.

It belongs to the beta-catenin family. Homodimer. Component of an E-cadherin/catenin adhesion complex composed of at least E-cadherin/CDH1 and gamma-catenin/JUP, and possibly alpha-catenin/CTNNA1; the complex is located to adherens junctions. The stable association of CTNNA1 is controversial as CTNNA1 was shown not to bind to F-actin when assembled in the complex. Interacts with MUC1. Interacts with CAV1. Interacts with PTPRJ. Interacts with DSG1. Interacts with DSC1 and DSC2. Interacts with PKP2. Interacts with PKP3 (via N-terminus); the interaction is required for PKP3 localization to desmosome cell-cell junctions. Interacts with DSG4. In terms of processing, may be phosphorylated by FER. In terms of tissue distribution, expressed in the heart (at protein level).

The protein resides in the cell junction. The protein localises to the adherens junction. It is found in the desmosome. It localises to the cytoplasm. Its subcellular location is the cytoskeleton. The protein resides in the cell membrane. The protein localises to the nucleus. Its function is as follows. Common junctional plaque protein. The membrane-associated plaques are architectural elements in an important strategic position to influence the arrangement and function of both the cytoskeleton and the cells within the tissue. The presence of plakoglobin in both the desmosomes and in the intermediate junctions suggests that it plays a central role in the structure and function of submembranous plaques. Acts as a substrate for VE-PTP and is required by it to stimulate VE-cadherin function in endothelial cells. Can replace beta-catenin in E-cadherin/catenin adhesion complexes which are proposed to couple cadherins to the actin cytoskeleton. The polypeptide is Junction plakoglobin (Homo sapiens (Human)).